Consider the following 496-residue polypeptide: Autophagy-related protein 21 (496 aa).

A WD 1 repeat occupies 1–35 (MKVLQFNQDATCCVVAASSHQISIFNCDPFGKCFE). A disordered region spans residues 41–86 (SKKKTSNNNGTASNSESRNNEESILITNGSRDRTDAEEEEDNEDNA). Low complexity predominate over residues 46-57 (SNNNGTASNSES). Acidic residues predominate over residues 75 to 84 (DAEEEEDNED). The WD 2 repeat unit spans residues 148 to 190 (VMNRKRMCVLLESDQIFIYDISCMKPLETIDLWEDHYKRSQAN). T213 carries the post-translational modification Phosphothreonine. S237 is subject to Phosphoserine. WD repeat units follow at residues 294–334 (VHKG…DYMS), 346–385 (TRLC…NSLP), and 448–488 (VNES…GECV). Residues 342-346 (FRRGT) carry the L/FRRG motif motif.

It belongs to the WD repeat PROPPIN family.

It is found in the cytoplasm. It localises to the vacuole membrane. Functionally, required for cytoplasm to vacuole transport (Cvt) vesicles formation and mitophagy. Involved in binding of phosphatidylethanolamine to ATG8 and in recruitment of ATG8 and ATG5 to the pre-autophagosomal structure. Protects ATG8 from ARG4-mediated cleavage. Essential for maturation of proaminopeptidase I. The sequence is that of Autophagy-related protein 21 (ATG21) from Saccharomyces cerevisiae (strain YJM789) (Baker's yeast).